The following is a 1843-amino-acid chain: GTPase-activating protein CdGAPr (1843 aa).

Positions 94 to 117 are disordered; the sequence is ASTESSCSPPIQGAVPPPKPSRHM. Residues serine 166, serine 168, and serine 180 each carry the phosphoserine modification. An SH3 domain is found at 295-363; the sequence is PAVGAAYGVR…PQSCVATIGD (69 aa). The 195-residue stretch at 424-618 folds into the Rho-GAP domain; the sequence is CDLSEHLLNS…YLIRNCHNIF (195 aa). Residues 746–780 form a disordered region; the sequence is PRSWQKRKPDKTPSWKSIFSRSQRQGNPDPGQKIT. Over residues 759 to 771 the composition is skewed to polar residues; sequence SWKSIFSRSQRQG. Serine 837 and serine 840 each carry phosphoserine. Threonine 843 is modified (phosphothreonine). 4 positions are modified to phosphoserine: serine 851, serine 861, serine 872, and serine 876. Disordered stretches follow at residues 894–975 and 1013–1106; these read ESES…GHES and ASVE…RVEP. A compositionally biased stretch (polar residues) spans 928–939; that stretch reads FSSQTNSVNPSP. The residue at position 1029 (serine 1029) is a Phosphoserine. A compositionally biased stretch (low complexity) spans 1029-1053; it reads SPISSSNGASVGSSSSSTRYSYPSV. The span at 1058–1069 shows a compositional bias: basic and acidic residues; sequence KRKEQQDAKERF. Over residues 1071–1097 the composition is skewed to polar residues; sequence YQGTFTQPGQKQESSAPRPVHSTNNGA. A phosphothreonine mark is found at threonine 1118 and threonine 1121. Phosphoserine is present on residues serine 1125, serine 1216, serine 1281, and serine 1284. Positions 1378–1404 form a coiled coil; that stretch reads YKAAEMTQQLLQLEQEHHDHEEQQEKE. Phosphoserine is present on residues serine 1453 and serine 1456. A Phosphothreonine modification is found at threonine 1679. Disordered stretches follow at residues 1721–1745 and 1779–1829; these read TGGG…LGQQ and TAQK…QFSI. Polar residues predominate over residues 1779–1790; it reads TAQKYGSTSKTP. A compositionally biased stretch (basic and acidic residues) spans 1793-1806; sequence KFERSQPMPRDRLQ. The span at 1807-1818 shows a compositional bias: polar residues; it reads RNSLAESNAGTN.

In terms of tissue distribution, ubiquitously expressed.

Functionally, probably functions as a GTPase-activating protein (GAP) for RAC1 and/or CDC42. Required for optic stalk formation. This is GTPase-activating protein CdGAPr (CdGAPr) from Drosophila melanogaster (Fruit fly).